The primary structure comprises 132 residues: Hemoglobin heart muscle subunit alpha-type (132 aa).

The 132-residue stretch at 1-132 (GLSDSEKSAV…GEVGAILTSS (132 aa)) folds into the Globin domain. His58 and His83 together coordinate heme b.

It belongs to the globin family. In terms of assembly, monomer.

In terms of biological role, this hemoglobin may replace myocardial myoglobin in this amphibian species. In Aquarana catesbeiana (American bullfrog), this protein is Hemoglobin heart muscle subunit alpha-type.